A 1261-amino-acid chain; its full sequence is Rho GTPase-activating protein 29 (1261 aa).

4 positions are modified to phosphoserine: S171, S176, S179, and S190. One can recognise an F-BAR domain in the interval 192–462 (LELDNVLLKN…SAKLYDPGQE (271 aa)). A coiled-coil region spans residues 296 to 418 (RKNEMEKQRK…EILAQLRTLV (123 aa)). A disordered region spans residues 481 to 501 (NVNKHLNSSQPSGFGPANSLE). Phosphoserine is present on residues S499, S519, and S552. Over residues 541 to 559 (SESTGGSSESRSLDSESIS) the composition is skewed to low complexity. The tract at residues 541–600 (SESTGGSSESRSLDSESISPGDFHRKLPRTPSSGTMSSADDLDEREPPSPSETGPNSLGT) is disordered. A Phorbol-ester/DAG-type zinc finger spans residues 612-657 (THKFRKLRSPTKCRDCEGIVVFQGVECEECLLVCHRKCLENLVIIC). Residues 671 to 886 (AEFTQVAKKE…FLITYSQKIF (216 aa)) enclose the Rho-GAP domain. S913 and S949 each carry phosphoserine. The disordered stretch occupies residues 981–1011 (SASQKIEDGKTPKPLSLKSDRSTNNVERHTP). The span at 998 to 1010 (KSDRSTNNVERHT) shows a compositional bias: basic and acidic residues. Phosphoserine occurs at positions 1019, 1144, and 1146. Disordered regions lie at residues 1117 to 1153 (HSIN…APVR) and 1178 to 1238 (GNEE…VNPM). Basic and acidic residues predominate over residues 1133-1144 (RSVREASERRSS). Positions 1258–1261 (PQFV) are interaction with PTPN13/PTPL1.

As to quaternary structure, interacts with PTPN13/PTPL1. Interacts with RAP2A via its coiled coil domain. Interacts with RASIP1. In terms of tissue distribution, widely expressed. Highly expressed in skeletal muscle and heart. Expressed at intermediate level in placenta, liver and pancreas. Weakly expressed in brain, lung and kidney.

Functionally, GTPase activator for the Rho-type GTPases by converting them to an inactive GDP-bound state. Has strong activity toward RHOA, and weaker activity toward RAC1 and CDC42. May act as a specific effector of RAP2A to regulate Rho. In concert with RASIP1, suppresses RhoA signaling and dampens ROCK and MYH9 activities in endothelial cells and plays an essential role in blood vessel tubulogenesis. The chain is Rho GTPase-activating protein 29 (ARHGAP29) from Homo sapiens (Human).